The sequence spans 122 residues: Large ribosomal subunit protein uL14 (122 aa).

It belongs to the universal ribosomal protein uL14 family. Part of the 50S ribosomal subunit. Forms a cluster with proteins L3 and L19. In the 70S ribosome, L14 and L19 interact and together make contacts with the 16S rRNA in bridges B5 and B8.

In terms of biological role, binds to 23S rRNA. Forms part of two intersubunit bridges in the 70S ribosome. The protein is Large ribosomal subunit protein uL14 of Acetivibrio thermocellus (strain ATCC 27405 / DSM 1237 / JCM 9322 / NBRC 103400 / NCIMB 10682 / NRRL B-4536 / VPI 7372) (Clostridium thermocellum).